We begin with the raw amino-acid sequence, 625 residues long: Phosphomethylpyrimidine synthase (625 aa).

Substrate contacts are provided by residues Asn-230, Met-259, Tyr-288, His-324, 344–346, 385–388, and Glu-424; these read SRG and DGLR. His-428 is a Zn(2+) binding site. Tyr-451 contributes to the substrate binding site. Zn(2+) is bound at residue His-492. The [4Fe-4S] cluster site is built by Cys-572, Cys-575, and Cys-580.

Belongs to the ThiC family. As to quaternary structure, homodimer. [4Fe-4S] cluster is required as a cofactor.

The enzyme catalyses 5-amino-1-(5-phospho-beta-D-ribosyl)imidazole + S-adenosyl-L-methionine = 4-amino-2-methyl-5-(phosphooxymethyl)pyrimidine + CO + 5'-deoxyadenosine + formate + L-methionine + 3 H(+). It participates in cofactor biosynthesis; thiamine diphosphate biosynthesis. Catalyzes the synthesis of the hydroxymethylpyrimidine phosphate (HMP-P) moiety of thiamine from aminoimidazole ribotide (AIR) in a radical S-adenosyl-L-methionine (SAM)-dependent reaction. This chain is Phosphomethylpyrimidine synthase, found in Xanthomonas euvesicatoria pv. vesicatoria (strain 85-10) (Xanthomonas campestris pv. vesicatoria).